The primary structure comprises 138 residues: Ribulose bisphosphate carboxylase small subunit (138 aa).

This sequence belongs to the RuBisCO small chain family. As to quaternary structure, heterohexadecamer of 8 large and 8 small subunits.

It localises to the plastid. The protein localises to the chloroplast. Functionally, ruBisCO catalyzes two reactions: the carboxylation of D-ribulose 1,5-bisphosphate, the primary event in carbon dioxide fixation, as well as the oxidative fragmentation of the pentose substrate in the photorespiration process. Both reactions occur simultaneously and in competition at the same active site. Although the small subunit is not catalytic it is essential for maximal activity. This is Ribulose bisphosphate carboxylase small subunit from Pyropia haitanensis (Red seaweed).